We begin with the raw amino-acid sequence, 587 residues long: Aspartate--tRNA ligase (587 aa).

E174 is an L-aspartate binding site. The segment at 198–201 is aspartate; it reads QITK. R220 is a binding site for L-aspartate. ATP is bound by residues 220–222 and Q229; that span reads RDE. Position 443 (H443) interacts with L-aspartate. E477 contributes to the ATP binding site. Residue R484 coordinates L-aspartate. 529-532 provides a ligand contact to ATP; that stretch reads GLDR.

This sequence belongs to the class-II aminoacyl-tRNA synthetase family. Type 1 subfamily. In terms of assembly, homodimer.

It is found in the cytoplasm. The catalysed reaction is tRNA(Asp) + L-aspartate + ATP = L-aspartyl-tRNA(Asp) + AMP + diphosphate. Catalyzes the attachment of L-aspartate to tRNA(Asp) in a two-step reaction: L-aspartate is first activated by ATP to form Asp-AMP and then transferred to the acceptor end of tRNA(Asp). This Streptococcus pneumoniae (strain Hungary19A-6) protein is Aspartate--tRNA ligase.